Consider the following 442-residue polypeptide: UDP-N-acetylmuramoylalanine--D-glutamate ligase (442 aa).

This sequence belongs to the MurCDEF family.

The protein localises to the cytoplasm. It carries out the reaction UDP-N-acetyl-alpha-D-muramoyl-L-alanine + D-glutamate + ATP = UDP-N-acetyl-alpha-D-muramoyl-L-alanyl-D-glutamate + ADP + phosphate + H(+). It functions in the pathway cell wall biogenesis; peptidoglycan biosynthesis. Its function is as follows. Cell wall formation. Catalyzes the addition of glutamate to the nucleotide precursor UDP-N-acetylmuramoyl-L-alanine (UMA). This chain is UDP-N-acetylmuramoylalanine--D-glutamate ligase, found in Buchnera aphidicola subsp. Baizongia pistaciae (strain Bp).